A 572-amino-acid polypeptide reads, in one-letter code: Probable transporter MCH1 (572 aa).

Over residues 1–29 the composition is skewed to polar residues; the sequence is MSSSAPDDTQASRLDADQISTRSSSYASD. Residues 1–39 are disordered; that stretch reads MSSSAPDDTQASRLDADQISTRSSSYASDNDTDSTETRI. Asn30 is a glycosylation site (N-linked (GlcNAc...) asparagine). The next 10 membrane-spanning stretches (helical) occupy residues 50–70, 89–109, 116–136, 159–179, 193–213, 232–252, 335–355, 426–446, 459–479, and 488–508; these read LLAFISANIIALACGSIVVFS, AVAISGSVALYLPISGVGYIC, PLALTGGILFGSGYGLAAGVY, FLMLSFVFVGVATCCLYMAAV, GLALATPITCFGLSPMWLSQA, VFRFFLFLAALTFFMGILGTF, LAFLLIVGPGEAFINNLGTII, FMAFFASMLSIGLLILASGLV, LVGAGYGAIFSLTPLMVTIIW, and YGLIGMLPAAGSTFWGLVYSA. N-linked (GlcNAc...) asparagine glycosylation occurs at Asn515. Residues 539-559 form a helical membrane-spanning segment; sequence PTYWAETITVWIAVGLLLWAW.

Belongs to the major facilitator superfamily.

It localises to the vacuole membrane. Its function is as follows. Probable transporter. The sequence is that of Probable transporter MCH1 (MCH1) from Gibberella zeae (strain ATCC MYA-4620 / CBS 123657 / FGSC 9075 / NRRL 31084 / PH-1) (Wheat head blight fungus).